Reading from the N-terminus, the 340-residue chain is Phenylalanine--tRNA ligase alpha subunit (340 aa).

E255 contacts Mg(2+).

Belongs to the class-II aminoacyl-tRNA synthetase family. Phe-tRNA synthetase alpha subunit type 1 subfamily. As to quaternary structure, tetramer of two alpha and two beta subunits. Mg(2+) serves as cofactor.

The protein localises to the cytoplasm. It carries out the reaction tRNA(Phe) + L-phenylalanine + ATP = L-phenylalanyl-tRNA(Phe) + AMP + diphosphate + H(+). The chain is Phenylalanine--tRNA ligase alpha subunit from Heliobacterium modesticaldum (strain ATCC 51547 / Ice1).